The sequence spans 235 residues: Secretory carrier-associated membrane protein 5 (235 aa).

Residues 1–39 (MAEKVNNFPPLPKFIPLKPCFYQDFEADIPPQHVSMTKR) are Cytoplasmic-facing. Residues 40-60 (LYYLWMLNSVTLAVNLVGCLA) form a helical membrane-spanning segment. Residues 61–67 (WLIGGGG) lie on the Extracellular side of the membrane. The helical transmembrane segment at 68–88 (ATNFGLAFLWLILFTPCSYVC) threads the bilayer. Topologically, residues 89-102 (WFRPIYKAFKTDSS) are cytoplasmic. The chain crosses the membrane as a helical span at residues 103–125 (FSFMAFFFTFMAQLVISIIQAVG). Residues 126–148 (IPGWGVCGWIATISFFGTNIGSA) lie on the Extracellular side of the membrane. Residues 149 to 169 (VVMLIPTVMFTVMAVFSFIAL) form a helical membrane-spanning segment. Over 170 to 235 (SMVHKFYRGS…TPNYTYSNEM (66 aa)) the chain is Cytoplasmic.

Belongs to the SCAMP family. SCAMP5 subfamily. In terms of assembly, interacts (via C-terminal part) with SYT1 and SYT2; interaction with synaptotagmins making a link with the SNARE molecules. Interacts with SLC9A7. As to expression, expressed both by neuronal and non-neuronal tissues. Expressed in brain, stomach, thyroid, spinal cord, lymph node, trachea, adrenal gland, bone marrow and in the different parts of brain. In thyroid tissues, it is expressed by the follicular epithelial cells. In the adrenal gland tissues it is detected in the zona fasciculata of the cortex region (at protein level).

Its subcellular location is the cell membrane. The protein localises to the golgi apparatus membrane. It is found in the golgi apparatus. The protein resides in the trans-Golgi network membrane. It localises to the recycling endosome membrane. Its subcellular location is the cytoplasmic vesicle. The protein localises to the secretory vesicle. It is found in the synaptic vesicle membrane. Functionally, required for the calcium-dependent exocytosis of signal sequence-containing cytokines such as CCL5. Probably acts in cooperation with the SNARE machinery. May play a role in accumulation of expanded polyglutamine (polyQ) protein huntingtin (HTT) in case of endoplasmic reticulum stress by inhibiting the endocytosis pathway. This Homo sapiens (Human) protein is Secretory carrier-associated membrane protein 5 (SCAMP5).